The sequence spans 100 residues: NADH-quinone oxidoreductase subunit K 2 (100 aa).

3 helical membrane passes run 4–24 (LWWY…GVLI), 28–48 (ILVV…NFIA), and 60–80 (IFAI…LGIL).

The protein belongs to the complex I subunit 4L family. NDH-1 is composed of 14 different subunits. Subunits NuoA, H, J, K, L, M, N constitute the membrane sector of the complex.

The protein localises to the cell inner membrane. It carries out the reaction a quinone + NADH + 5 H(+)(in) = a quinol + NAD(+) + 4 H(+)(out). Functionally, NDH-1 shuttles electrons from NADH, via FMN and iron-sulfur (Fe-S) centers, to quinones in the respiratory chain. The immediate electron acceptor for the enzyme in this species is believed to be ubiquinone. Couples the redox reaction to proton translocation (for every two electrons transferred, four hydrogen ions are translocated across the cytoplasmic membrane), and thus conserves the redox energy in a proton gradient. The protein is NADH-quinone oxidoreductase subunit K 2 of Rhizobium etli (strain ATCC 51251 / DSM 11541 / JCM 21823 / NBRC 15573 / CFN 42).